Here is a 795-residue protein sequence, read N- to C-terminus: Phenylalanine--tRNA ligase beta subunit (795 aa).

The region spanning 39–148 (AAEFNGVVIG…LDAPLGTDLR (110 aa)) is the tRNA-binding domain. The region spanning 401 to 476 (PKPAQILLRR…RIYGYNNIPN (76 aa)) is the B5 domain. 4 residues coordinate Mg(2+): aspartate 454, aspartate 460, glutamate 463, and glutamate 464. The 94-residue stretch at 701–794 (SKFPANRRDI…LKTEFNASLR (94 aa)) folds into the FDX-ACB domain.

Belongs to the phenylalanyl-tRNA synthetase beta subunit family. Type 1 subfamily. In terms of assembly, tetramer of two alpha and two beta subunits. It depends on Mg(2+) as a cofactor.

It localises to the cytoplasm. It carries out the reaction tRNA(Phe) + L-phenylalanine + ATP = L-phenylalanyl-tRNA(Phe) + AMP + diphosphate + H(+). The polypeptide is Phenylalanine--tRNA ligase beta subunit (Shewanella oneidensis (strain ATCC 700550 / JCM 31522 / CIP 106686 / LMG 19005 / NCIMB 14063 / MR-1)).